A 340-amino-acid polypeptide reads, in one-letter code: Phosphoribosylformylglycinamidine cyclo-ligase (340 aa).

It belongs to the AIR synthase family.

Its subcellular location is the cytoplasm. The catalysed reaction is 2-formamido-N(1)-(5-O-phospho-beta-D-ribosyl)acetamidine + ATP = 5-amino-1-(5-phospho-beta-D-ribosyl)imidazole + ADP + phosphate + H(+). Its pathway is purine metabolism; IMP biosynthesis via de novo pathway; 5-amino-1-(5-phospho-D-ribosyl)imidazole from N(2)-formyl-N(1)-(5-phospho-D-ribosyl)glycinamide: step 2/2. The protein is Phosphoribosylformylglycinamidine cyclo-ligase of Streptococcus pyogenes serotype M28 (strain MGAS6180).